A 230-amino-acid chain; its full sequence is Cytidylate kinase (230 aa).

12–20 (GPSGAGKGT) is a binding site for ATP.

This sequence belongs to the cytidylate kinase family. Type 1 subfamily.

It is found in the cytoplasm. The catalysed reaction is CMP + ATP = CDP + ADP. The enzyme catalyses dCMP + ATP = dCDP + ADP. The polypeptide is Cytidylate kinase (Shewanella sp. (strain MR-7)).